An 836-amino-acid chain; its full sequence is Protein-glutamine gamma-glutamyltransferase K (836 aa).

Over residues Met-1–Val-33 the composition is skewed to basic and acidic residues. Disordered stretches follow at residues Met-1–Gly-68 and Asp-89–Ile-125. Thr-46 is subject to Phosphothreonine. Ser-48, Ser-98, and Ser-112 each carry phosphoserine. A compositionally biased stretch (basic and acidic residues) spans Asp-89 to Ser-112. Catalysis depends on residues Cys-397, His-456, and Asp-479. The Ca(2+) site is built by Asn-519, Asp-521, Glu-568, and Glu-573. Ser-824 is subject to Phosphoserine.

The protein belongs to the transglutaminase superfamily. Transglutaminase family. In terms of assembly, interacts with PLAAT4. Ca(2+) is required as a cofactor. Palmitoylated. Post-translationally, the membrane anchorage region possesses a cluster of five cysteines within which fatty acid(s) may become thioester-linked. It is subject to phorbol ester-stimulated phosphorylation and is hypersensitive to proteolysis, which releases the enzyme in a soluble form. In terms of processing, tyrosine-phosphorylated.

It localises to the membrane. It catalyses the reaction L-glutaminyl-[protein] + L-lysyl-[protein] = [protein]-L-lysyl-N(6)-5-L-glutamyl-[protein] + NH4(+). Its activity is regulated as follows. Inhibited by retinoic acid, but phorbol ester treatment activates it. Its function is as follows. Catalyzes the cross-linking of proteins and the conjugation of polyamines to proteins. Responsible for cross-linking epidermal proteins during formation of the stratum corneum. Involved in cell proliferation. In Oryctolagus cuniculus (Rabbit), this protein is Protein-glutamine gamma-glutamyltransferase K (TGM1).